Here is a 317-residue protein sequence, read N- to C-terminus: Transaldolase (317 aa).

Residue Lys-126 is the Schiff-base intermediate with substrate of the active site.

It belongs to the transaldolase family. Type 1 subfamily. Homodimer.

The protein resides in the cytoplasm. The enzyme catalyses D-sedoheptulose 7-phosphate + D-glyceraldehyde 3-phosphate = D-erythrose 4-phosphate + beta-D-fructose 6-phosphate. Its pathway is carbohydrate degradation; pentose phosphate pathway; D-glyceraldehyde 3-phosphate and beta-D-fructose 6-phosphate from D-ribose 5-phosphate and D-xylulose 5-phosphate (non-oxidative stage): step 2/3. Transaldolase is important for the balance of metabolites in the pentose-phosphate pathway. The polypeptide is Transaldolase (Paraburkholderia phytofirmans (strain DSM 17436 / LMG 22146 / PsJN) (Burkholderia phytofirmans)).